Consider the following 230-residue polypeptide: uncharacterized protein (230 aa).

This is an uncharacterized protein from Mycobacterium tuberculosis (strain ATCC 25618 / H37Rv).